Reading from the N-terminus, the 505-residue chain is Histidine ammonia-lyase (505 aa).

A cross-link (5-imidazolinone (Ala-Gly)) is located at residues 141 to 143 (ASG). Serine 142 is modified (2,3-didehydroalanine (Ser)).

It belongs to the PAL/histidase family. In terms of processing, contains an active site 4-methylidene-imidazol-5-one (MIO), which is formed autocatalytically by cyclization and dehydration of residues Ala-Ser-Gly.

The protein resides in the cytoplasm. The catalysed reaction is L-histidine = trans-urocanate + NH4(+). Its pathway is amino-acid degradation; L-histidine degradation into L-glutamate; N-formimidoyl-L-glutamate from L-histidine: step 1/3. This chain is Histidine ammonia-lyase, found in Bacillus cereus (strain 03BB102).